We begin with the raw amino-acid sequence, 324 residues long: Polycomb complex protein BMI-1-B (324 aa).

An RING-type zinc finger spans residues 18–57; sequence CVLCGGYFIDATTIVECLHSFCKMCIVRYLETSKYCPICD. The Nuclear localization signal signature appears at 81–95; that stretch reads KLVPGLFKNEMKRRR. The segment at 232–324 is disordered; it reads IKLSSPRNDM…TSHNGSNSLG (93 aa). A compositionally biased stretch (low complexity) spans 256 to 279; it reads DKPNSPSIVAAPSTSSSMPSPNTP. Composition is skewed to polar residues over residues 280 to 295 and 303 to 324; these read VQSTHPSFPHISTING and NGQTPFSSKVCKTSHNGSNSLG.

As to quaternary structure, component of a PRC1-like complex. Homodimer. Interacts with cbx2.

Its subcellular location is the nucleus. Component of a Polycomb group (PcG) multiprotein PRC1-like complex, a complex class required to maintain the transcriptionally repressive state of many genes, including Hox genes, throughout development. PcG PRC1 complex acts via chromatin remodeling and modification of histones; it mediates monoubiquitination of histone H2A 'Lys-119', rendering chromatin heritably changed in its expressibility. In the PRC1 complex, it is required to stimulate the E3 ubiquitin-protein ligase activity of rnf2. The sequence is that of Polycomb complex protein BMI-1-B (bmi1b) from Danio rerio (Zebrafish).